An 888-amino-acid polypeptide reads, in one-letter code: Molybdenum cofactor sulfurase (888 aa).

The residue at position 34 (serine 34) is a Phosphoserine. At lysine 264 the chain carries N6-(pyridoxal phosphate)lysine. The active site involves cysteine 424. Phosphoserine occurs at positions 528 and 530. The region spanning 706–867 is the MOSC domain; it reads KQSSNSQRNA…LSVGSQVLPV (162 aa).

Belongs to the class-V pyridoxal-phosphate-dependent aminotransferase family. MOCOS subfamily. It depends on pyridoxal 5'-phosphate as a cofactor.

The catalysed reaction is Mo-molybdopterin + L-cysteine + AH2 = thio-Mo-molybdopterin + L-alanine + A + H2O. Its pathway is cofactor biosynthesis; molybdopterin biosynthesis. Its function is as follows. Sulfurates the molybdenum cofactor. Sulfation of molybdenum is essential for xanthine dehydrogenase (XDH) and aldehyde oxidase (ADO) enzymes in which molybdenum cofactor is liganded by 1 oxygen and 1 sulfur atom in active form. In vitro, the C-terminal domain is able to reduce N-hydroxylated prodrugs, such as benzamidoxime. This Homo sapiens (Human) protein is Molybdenum cofactor sulfurase.